Reading from the N-terminus, the 206-residue chain is Small ribosomal subunit protein uS4 (206 aa).

The 61-residue stretch at 96–156 (GRLDNVVYRM…EKAKKQARIK (61 aa)) folds into the S4 RNA-binding domain.

It belongs to the universal ribosomal protein uS4 family. As to quaternary structure, part of the 30S ribosomal subunit. Contacts protein S5. The interaction surface between S4 and S5 is involved in control of translational fidelity.

Functionally, one of the primary rRNA binding proteins, it binds directly to 16S rRNA where it nucleates assembly of the body of the 30S subunit. Its function is as follows. With S5 and S12 plays an important role in translational accuracy. The polypeptide is Small ribosomal subunit protein uS4 (Tolumonas auensis (strain DSM 9187 / NBRC 110442 / TA 4)).